The following is a 490-amino-acid chain: Glycogen synthase kinase-3 alpha (490 aa).

Gly residues predominate over residues 1 to 15 (MSGGGPSGGGPGGSG). The interval 1-97 (MSGGGPSGGG…PPGVKLGRDS (97 aa)) is disordered. N-acetylserine is present on serine 2. Phosphoserine is present on serine 2. Serine 21 is subject to Phosphoserine; by PKB/AKT1. Over residues 25-82 (PGGGGGGGGGGPGGSASGPGGTGGGKASVGAMGGGVGASSSGGGPSGSGGGGSGGPGA) the composition is skewed to gly residues. Phosphoserine occurs at positions 72, 77, and 97. A Protein kinase domain is found at 119-404 (YTDIKVIGNG…PLEACAHSFF (286 aa)). Residues 125 to 133 (IGNGSFGVV) and lysine 148 contribute to the ATP site. Residue aspartate 244 is the Proton acceptor of the active site. At tyrosine 279 the chain carries Phosphotyrosine. The disordered stretch occupies residues 451 to 490 (GPASPLTTSYNPSSQALTEAQTGQDWQPSDATTATLASSS). Polar residues predominate over residues 455-480 (PLTTSYNPSSQALTEAQTGQDWQPSD). Over residues 481–490 (ATTATLASSS) the composition is skewed to low complexity.

This sequence belongs to the protein kinase superfamily. CMGC Ser/Thr protein kinase family. GSK-3 subfamily. Monomer. Interacts with AXIN1 and CTNNB1/beta-catenin. Interacts with ARRB2. Interacts with CTNND2. Interacts with LMBR1L. Interacts with DDX3X. Interacts with TNFRSF10B. In terms of processing, phosphorylated by AKT1 at Ser-21: upon insulin-mediated signaling, the activated PKB/AKT1 protein kinase phosphorylates and deactivates GSK3A, resulting in the dephosphorylation and activation of GYS1. Activated by phosphorylation at Tyr-279.

The enzyme catalyses L-seryl-[tau protein] + ATP = O-phospho-L-seryl-[tau protein] + ADP + H(+). The catalysed reaction is L-threonyl-[tau protein] + ATP = O-phospho-L-threonyl-[tau protein] + ADP + H(+). It carries out the reaction L-seryl-[protein] + ATP = O-phospho-L-seryl-[protein] + ADP + H(+). It catalyses the reaction L-threonyl-[protein] + ATP = O-phospho-L-threonyl-[protein] + ADP + H(+). Activated by phosphorylation at Tyr-279. In response to insulin, inhibited by phosphorylation at Ser-21 by PKB/AKT1; phosphorylation at this site causes a conformational change, preventing access of substrates to the active site. Inhibited by lithium. In terms of biological role, constitutively active protein kinase that acts as a negative regulator in the hormonal control of glucose homeostasis, Wnt signaling and regulation of transcription factors and microtubules, by phosphorylating and inactivating glycogen synthase (GYS1 or GYS2), CTNNB1/beta-catenin, APC and AXIN1. Requires primed phosphorylation of the majority of its substrates. Contributes to insulin regulation of glycogen synthesis by phosphorylating and inhibiting GYS1 activity and hence glycogen synthesis. Regulates glycogen metabolism in liver, but not in muscle. May also mediate the development of insulin resistance by regulating activation of transcription factors. In Wnt signaling, regulates the level and transcriptional activity of nuclear CTNNB1/beta-catenin. Facilitates amyloid precursor protein (APP) processing and the generation of APP-derived amyloid plaques found in Alzheimer disease. May be involved in the regulation of replication in pancreatic beta-cells. Is necessary for the establishment of neuronal polarity and axon outgrowth. Through phosphorylation of the anti-apoptotic protein MCL1, may control cell apoptosis in response to growth factors deprivation. Acts as a regulator of autophagy by mediating phosphorylation of KAT5/TIP60 under starvation conditions, activating KAT5/TIP60 acetyltransferase activity and promoting acetylation of key autophagy regulators, such as ULK1 and RUBCNL/Pacer. Negatively regulates extrinsic apoptotic signaling pathway via death domain receptors. Promotes the formation of an anti-apoptotic complex, made of DDX3X, BRIC2 and GSK3B, at death receptors, including TNFRSF10B. The anti-apoptotic function is most effective with weak apoptotic signals and can be overcome by stronger stimulation. The sequence is that of Glycogen synthase kinase-3 alpha (Gsk3a) from Mus musculus (Mouse).